Reading from the N-terminus, the 436-residue chain is Coiled-coil domain-containing protein 71 (436 aa).

The interval 95 to 119 is disordered; the sequence is ATSLPARAPQTAKSVPTGQTTLLPV. Residues 105 to 116 are compositionally biased toward polar residues; it reads TAKSVPTGQTTL. S129 bears the Phosphoserine mark. Disordered regions lie at residues 210–258 and 314–405; these read LRKG…MKGR and ALRG…KVDR. Residues 264-334 adopt a coiled-coil conformation; the sequence is KTVRGKAPRT…QAKAKAARTK (71 aa). Over residues 329 to 340 the composition is skewed to basic residues; that stretch reads KAARTKHKKRPK. Residues 344 to 359 are compositionally biased toward polar residues; the sequence is QTRTGRTSLKNSSETV. The span at 373–386 shows a compositional bias: basic residues; it reads PPKKRARCVPRSKA.

This chain is Coiled-coil domain-containing protein 71 (Ccdc71), found in Rattus norvegicus (Rat).